The primary structure comprises 482 residues: Caspase-8 (482 aa).

Residues 1–218 constitute a propeptide that is removed on maturation; it reads MDFHSCLYDI…DMWDSPGEQE (218 aa). 2 DED domains span residues 2–80 and 100–177; these read DFHS…RVLK and AYRV…RIDD. A phosphoserine mark is found at serine 188 and serine 213. Residue histidine 319 is part of the active site. Phosphotyrosine is present on tyrosine 336. Residue cysteine 362 is part of the active site. The propeptide occupies 379–388; the sequence is LEQEHVLEED. Residue serine 390 is modified to Phosphoserine; by CDK1.

It belongs to the peptidase C14A family. Heterotetramer that consists of two anti-parallel arranged heterodimers, each one formed by a 18 kDa (p18) and a 10 kDa (p10) subunit. Component of the death-induced signaling complex (DISC) composed of cell surface receptor FAS/CD95 or TNFRSF1A, adapter protein FADD and the CASP8 protease; recruitment of CASP8 to the complex is required for processing of CASP8 into the p18 and p10 subunits. Component of the AIM2 PANoptosome complex, a multiprotein complex that drives inflammatory cell death (PANoptosis). Interacts with CFLAR and PEA15. Interacts with RFFL and RNF34; negatively regulate CASP8 through proteasomal degradation. Interacts with TNFAIP8L2. Interacts with CASP8AP2. Interacts with NOL3; decreases CASP8 activity in a mitochondria localization- and phosphorylation-dependent manner and this interaction is dissociated by calcium. Interacts with UBR2. Interacts with RIPK1. Interacts with stimulated TNFRSF10B; this interaction is followed by CASP8 proteolytic cleavage and activation. In terms of processing, generation of the subunits requires association with the death-inducing signaling complex (DISC), whereas additional processing is likely due to the autocatalytic activity of the activated protease. GZMB and CASP10 can be involved in these processing events. Post-translationally, phosphorylation on Ser-389 during mitosis by CDK1 inhibits activation by proteolysis and prevents apoptosis. This phosphorylation occurs in cancer cell lines, as well as in primary breast tissues and lymphocytes.

The protein localises to the cytoplasm. Its subcellular location is the nucleus. It catalyses the reaction Strict requirement for Asp at position P1 and has a preferred cleavage sequence of (Leu/Asp/Val)-Glu-Thr-Asp-|-(Gly/Ser/Ala).. With respect to regulation, CASP8 activity is restricted by RIPK1. Its function is as follows. Thiol protease that plays a key role in programmed cell death by acting as a molecular switch for apoptosis, necroptosis and pyroptosis, and is required to prevent tissue damage during embryonic development and adulthood. Initiator protease that induces extrinsic apoptosis by mediating cleavage and activation of effector caspases responsible for FAS/CD95-mediated and TNFRSF1A-induced cell death. Cleaves and activates effector caspases CASP3, CASP4, CASP6, CASP7, CASP9 and CASP10. Binding to the adapter molecule FADD recruits it to either receptor FAS/CD95 or TNFRSF1A. The resulting aggregate called the death-inducing signaling complex (DISC) performs CASP8 proteolytic activation. The active dimeric enzyme is then liberated from the DISC and free to activate downstream apoptotic proteases. Proteolytic fragments of the N-terminal propeptide (termed CAP3, CAP5 and CAP6) are likely retained in the DISC. In addition to extrinsic apoptosis, also acts as a negative regulator of necroptosis: acts by cleaving RIPK1 at 'Asp-325', which is crucial to inhibit RIPK1 kinase activity, limiting TNF-induced apoptosis, necroptosis and inflammatory response. Also able to initiate pyroptosis by mediating cleavage and activation of gasdermin-C and -D (GSDMC and GSDMD, respectively): gasdermin cleavage promotes release of the N-terminal moiety that binds to membranes and forms pores, triggering pyroptosis. Initiates pyroptosis following inactivation of MAP3K7/TAK1. Also acts as a regulator of innate immunity by mediating cleavage and inactivation of N4BP1 downstream of TLR3 or TLR4, thereby promoting cytokine production. May participate in the Granzyme B (GZMB) cell death pathways. Cleaves PARP1 and PARP2. This chain is Caspase-8, found in Rattus norvegicus (Rat).